A 175-amino-acid polypeptide reads, in one-letter code: DASH complex subunit DAM1 (175 aa).

The disordered stretch occupies residues methionine 1 to alanine 39. Residues arginine 20 to alanine 39 show a composition bias toward low complexity.

It belongs to the DASH complex DAM1 family. Component of the DASH complex consisting of ASK1, DAD1, DAD2, DAD3, DAD4, DAM1, DUO1, HSK3, SPC19 and SPC34, with a stoichiometry of one copy of each subunit per complex. Multiple DASH complexes oligomerize to form a ring that encircles spindle microtubules and organizes the rod-like NDC80 complexes of the outer kinetochore. DASH complex oligomerization strengthens microtubule attachments. On cytoplasmic microtubules, DASH complexes appear to form patches instead of rings.

It localises to the chromosome. The protein resides in the centromere. Its subcellular location is the kinetochore. It is found in the cytoplasm. The protein localises to the cytoskeleton. It localises to the spindle. The protein resides in the nucleus. Its function is as follows. Component of the DASH complex that connects microtubules with kinetochores and couples microtubule depolymerisation to chromosome movement; it is involved in retrieving kinetochores to the spindle poles before their re-orientation on the spindle in early mitosis and allows microtubule depolymerization to pull chromosomes apart and resist detachment during anaphase. Kinetochores, consisting of a centromere-associated inner segment and a microtubule-contacting outer segment, play a crucial role in chromosome segregation by mediating the physical connection between centromeric DNA and microtubules. Kinetochores also serve as an input point for the spindle assembly checkpoint, which delays anaphase until all chromosomes have bioriented on the mitotic spindle. The chain is DASH complex subunit DAM1 from Chaetomium thermophilum (strain DSM 1495 / CBS 144.50 / IMI 039719) (Thermochaetoides thermophila).